A 523-amino-acid polypeptide reads, in one-letter code: Flavonoid 3',5'-hydroxylase (523 aa).

Cys-460 contacts heme.

This sequence belongs to the cytochrome P450 family. Requires heme as cofactor.

The catalysed reaction is a 3',5'-unsubstituted flavanone + 2 reduced [NADPH--hemoprotein reductase] + 2 O2 = a 3',5'-dihydroxyflavanone + 2 oxidized [NADPH--hemoprotein reductase] + 2 H2O + 2 H(+). Its pathway is pigment biosynthesis; anthocyanin biosynthesis. Catalyzes the 3'5'-hydroxylation of naringenin and eriodictyol to form 5,7,3,'4',5'-pentahydroxyflavanone and 3',5'-hydroxylation of dihydrokaempferol and dihydroquercetin to form dihydromyricetin. The chain is Flavonoid 3',5'-hydroxylase (CYP75A6) from Campanula medium (Canterbury bells).